Reading from the N-terminus, the 515-residue chain is Lysosomal acid glucosylceramidase (515 aa).

The first 19 residues, 1-19 (MAARLIGFFLFQAVSWAYG), serve as a signal peptide directing secretion. 2 cysteine pairs are disulfide-bonded: Cys23–Cys35 and Cys37–Cys42. N-linked (GlcNAc...) asparagine glycans are attached at residues Asn38 and Asn78. A glycan (N-linked (GlcNAc...) (high mannose) asparagine) is linked at Asn165. Glu254 functions as the Proton donor in the catalytic mechanism. Residue Asn289 is glycosylated (N-linked (GlcNAc...) asparagine). The active-site Nucleophile is Glu358. Asn480 is a glycosylation site (N-linked (GlcNAc...) asparagine).

The protein belongs to the glycosyl hydrolase 30 family. In terms of assembly, interacts with saposin-C. Interacts with SCARB2. Interacts with TCP1. Interacts with GRN; this interaction prevents aggregation of GBA1-SCARB2 complex via interaction with HSPA1A upon stress.

The protein localises to the lysosome membrane. It carries out the reaction a beta-D-glucosyl-(1&lt;-&gt;1')-N-acylsphing-4-enine + H2O = an N-acylsphing-4-enine + D-glucose. It catalyses the reaction a beta-D-galactosyl-(1&lt;-&gt;1')-N-acylsphing-4-enine + H2O = an N-acylsphing-4-enine + D-galactose. The enzyme catalyses cholesteryl 3-beta-D-glucoside + H2O = cholesterol + D-glucose. The catalysed reaction is a beta-D-glucosyl-(1&lt;-&gt;1')-N-acylsphing-4-enine + cholesterol = cholesteryl 3-beta-D-glucoside + an N-acylsphing-4-enine. It carries out the reaction beta-D-glucosyl-(1&lt;-&gt;1')-N-hexadecanoylsphing-4-enine + cholesterol = cholesteryl 3-beta-D-glucoside + N-hexadecanoylsphing-4-enine. It catalyses the reaction beta-D-glucosyl-N-(9Z-octadecenoyl)-sphing-4E-enine + cholesterol = N-(9Z-octadecenoyl)-sphing-4-enine + cholesteryl 3-beta-D-glucoside. The enzyme catalyses beta-D-glucosyl-N-octanoylsphing-4E-enine + cholesterol = N-octanoylsphing-4-enine + cholesteryl 3-beta-D-glucoside. The catalysed reaction is beta-D-glucosyl-N-dodecanoylsphing-4-enine + cholesterol = N-dodecanoylsphing-4-enine + cholesteryl 3-beta-D-glucoside. It carries out the reaction beta-D-glucosyl-(1&lt;-&gt;1)-N-octadecanoylsphing-4-enine + cholesterol = N-octadecanoylsphing-4-enine + cholesteryl 3-beta-D-glucoside. It catalyses the reaction beta-D-glucosyl-(1&lt;-&gt;1')-N-(15Z-tetracosenoyl)-sphing-4-enine + cholesterol = N-(15Z-tetracosenoyl)-sphing-4-enine + cholesteryl 3-beta-D-glucoside. The enzyme catalyses a beta-D-galactosyl-(1&lt;-&gt;1')-N-acylsphing-4-enine + cholesterol = cholesteryl 3-beta-D-galactoside + an N-acylsphing-4-enine. The catalysed reaction is 1-(beta-D-galactosyl)-N-dodecanoylsphing-4-enine + cholesterol = cholesteryl 3-beta-D-galactoside + N-dodecanoylsphing-4-enine. It carries out the reaction a beta-D-xylosyl-(1&lt;-&gt;1')-N-acylsphing-4-enine + cholesterol = cholesteryl 3-beta-D-xyloside + an N-acylsphing-4-enine. It catalyses the reaction beta-D-xylosyl-(1&lt;-&gt;1')-N-(9Z-octadecenoyl)-sphing-4-enine + cholesterol = cholesteryl 3-beta-D-xyloside + N-(9Z-octadecenoyl)-sphing-4-enine. It participates in steroid metabolism; cholesterol metabolism. It functions in the pathway sphingolipid metabolism. Inhibited by conduritol B epoxide/CBE. Functionally, glucosylceramidase that catalyzes, within the lysosomal compartment, the hydrolysis of glucosylceramides/GlcCers (such as beta-D-glucosyl-(1&lt;-&gt;1')-N-acylsphing-4-enine) into free ceramides (such as N-acylsphing-4-enine) and glucose. Plays a central role in the degradation of complex lipids and the turnover of cellular membranes. Through the production of ceramides, participates in the PKC-activated salvage pathway of ceramide formation. Catalyzes the glucosylation of cholesterol, through a transglucosylation reaction where glucose is transferred from GlcCer to cholesterol. GlcCer containing mono-unsaturated fatty acids (such as beta-D-glucosyl-N-(9Z-octadecenoyl)-sphing-4-enine) are preferred as glucose donors for cholesterol glucosylation when compared with GlcCer containing same chain length of saturated fatty acids (such as beta-D-glucosyl-N-octadecanoyl-sphing-4-enine). Under specific conditions, may alternatively catalyze the reverse reaction, transferring glucose from cholesteryl 3-beta-D-glucoside to ceramide. Can also hydrolyze cholesteryl 3-beta-D-glucoside producing glucose and cholesterol. Catalyzes the hydrolysis of galactosylceramides/GalCers (such as beta-D-galactosyl-(1&lt;-&gt;1')-N-acylsphing-4-enine), as well as the transfer of galactose between GalCers and cholesterol in vitro, but with lower activity than with GlcCers. Contrary to GlcCer and GalCer, xylosylceramide/XylCer (such as beta-D-xyosyl-(1&lt;-&gt;1')-N-acylsphing-4-enine) is not a good substrate for hydrolysis, however it is a good xylose donor for transxylosylation activity to form cholesteryl 3-beta-D-xyloside. This chain is Lysosomal acid glucosylceramidase (Gba1), found in Mus musculus (Mouse).